Consider the following 242-residue polypeptide: ATP synthase subunit a (242 aa).

A run of 5 helical transmembrane segments spans residues 21–41 (LSSI…AIIC), 83–103 (AVTL…FSIV), 117–137 (DATV…FYGI), 175–195 (LYGN…LFFN), and 198–218 (AWGW…SIFV).

The protein belongs to the ATPase A chain family. In terms of assembly, F-type ATPases have 2 components, CF(1) - the catalytic core - and CF(0) - the membrane proton channel. CF(1) has five subunits: alpha(3), beta(3), gamma(1), delta(1), epsilon(1). CF(0) has three main subunits: a(1), b(2) and c(9-12). The alpha and beta chains form an alternating ring which encloses part of the gamma chain. CF(1) is attached to CF(0) by a central stalk formed by the gamma and epsilon chains, while a peripheral stalk is formed by the delta and b chains.

It is found in the cell membrane. Functionally, key component of the proton channel; it plays a direct role in the translocation of protons across the membrane. This Staphylococcus aureus (strain Newman) protein is ATP synthase subunit a.